Consider the following 542-residue polypeptide: Hydroxylamine reductase (542 aa).

4 residues coordinate [4Fe-4S] cluster: cysteine 3, cysteine 6, cysteine 15, and cysteine 21. The hybrid [4Fe-2O-2S] cluster site is built by histidine 243, glutamate 267, cysteine 311, cysteine 398, cysteine 426, cysteine 451, glutamate 485, and lysine 487. A Cysteine persulfide modification is found at cysteine 398.

The protein belongs to the HCP family. [4Fe-4S] cluster serves as cofactor. It depends on hybrid [4Fe-2O-2S] cluster as a cofactor.

It is found in the cytoplasm. It carries out the reaction A + NH4(+) + H2O = hydroxylamine + AH2 + H(+). Catalyzes the reduction of hydroxylamine to form NH(3) and H(2)O. This is Hydroxylamine reductase from Syntrophobacter fumaroxidans (strain DSM 10017 / MPOB).